A 270-amino-acid chain; its full sequence is Hemin import ATP-binding protein HmuV (270 aa).

Positions 2–238 constitute an ABC transporter domain; sequence LTVENIEVTL…VTLSQAYGCT (237 aa). 34–41 contacts ATP; it reads GHNGSGKT.

It belongs to the ABC transporter superfamily. Heme (hemin) importer (TC 3.A.1.14.5) family. As to quaternary structure, the complex is composed of two ATP-binding proteins (HmuV), two transmembrane proteins (HmuU) and a solute-binding protein (HmuT).

It is found in the cell inner membrane. Part of the ABC transporter complex HmuTUV involved in hemin import. Responsible for energy coupling to the transport system. This Jannaschia sp. (strain CCS1) protein is Hemin import ATP-binding protein HmuV.